Here is a 366-residue protein sequence, read N- to C-terminus: Mannonate dehydratase (366 aa).

It belongs to the mannonate dehydratase family. Fe(2+) serves as cofactor. The cofactor is Mn(2+).

It catalyses the reaction D-mannonate = 2-dehydro-3-deoxy-D-gluconate + H2O. The protein operates within carbohydrate metabolism; pentose and glucuronate interconversion. Its function is as follows. Catalyzes the dehydration of D-mannonate. This Streptococcus suis (strain 98HAH33) protein is Mannonate dehydratase.